The primary structure comprises 632 residues: tRNA uridine 5-carboxymethylaminomethyl modification enzyme MnmG (632 aa).

FAD is bound by residues 13-18, valine 125, and serine 180; that span reads GGGHAG. An NAD(+)-binding site is contributed by 273-287; sequence GPRYCPSIEDKVMRF. Glutamine 370 contributes to the FAD binding site.

The protein belongs to the MnmG family. As to quaternary structure, homodimer. Heterotetramer of two MnmE and two MnmG subunits. FAD is required as a cofactor.

It is found in the cytoplasm. Functionally, NAD-binding protein involved in the addition of a carboxymethylaminomethyl (cmnm) group at the wobble position (U34) of certain tRNAs, forming tRNA-cmnm(5)s(2)U34. The chain is tRNA uridine 5-carboxymethylaminomethyl modification enzyme MnmG from Vibrio vulnificus (strain CMCP6).